The following is an 893-amino-acid chain: Flippase kinase 1 (893 aa).

Over residues 1–23 (MAGHHHEHEQERDHEQEHEHDSL) the composition is skewed to basic and acidic residues. Disordered stretches follow at residues 1–124 (MAGH…SSKL), 129–148 (PMTS…PTIP), and 163–243 (QHEH…ERAG). The span at 24 to 42 (QRPTTGSERTRSISFSKLL) shows a compositional bias: polar residues. Positions 49–62 (NASSSNNMSVSSVN) are enriched in low complexity. A compositionally biased stretch (polar residues) spans 76–87 (NNSGSEGQSSRF). Positions 96-122 (SGNSSKNASAHNSSQSSLEGDSASSSS) are enriched in low complexity. Phosphoserine occurs at positions 140, 144, 171, 175, and 185. Positions 206-216 (SQNSNNSSSTS) are enriched in low complexity. The span at 228–237 (GSQGFSSNNP) shows a compositional bias: polar residues. A Phosphoserine modification is found at serine 300. Positions 334–355 (DTLNGSPSRGSSKSPTITQTFP) are enriched in polar residues. Positions 334 to 480 (DTLNGSPSRG…PRRSRRLRTK (147 aa)) are disordered. The segment covering 370-380 (NNDKHDEKEEQ) has biased composition (basic and acidic residues). The span at 381 to 399 (QTTTDNKTRNLSPTKQNGK) shows a compositional bias: polar residues. Serine 414 is subject to Phosphoserine. Low complexity predominate over residues 422-439 (ASATSPTSSSARKTSGSS). Serine 462 bears the Phosphoserine mark. Residues 496 to 777 (FEKIRLLGQG…AADVKKHPFF (282 aa)) form the Protein kinase domain. ATP is bound by residues 502–510 (LGQGDVGKV) and lysine 525. The active-site Proton acceptor is the aspartate 621. Positions 778 to 861 (KKVQWSLLRN…MSLMEQDNNS (84 aa)) constitute an AGC-kinase C-terminal domain. The segment at 874 to 893 (AYTPNSNRSRSNSHRTFFKR) is disordered. A compositionally biased stretch (basic residues) spans 884-893 (SNSHRTFFKR).

This sequence belongs to the protein kinase superfamily. Ser/Thr protein kinase family. KIN82 subfamily. Post-translationally, the N-terminal non-catalytic domain is phosphorylated by YPK1.

The protein localises to the cytoplasm. Its subcellular location is the cell membrane. The catalysed reaction is L-seryl-[protein] + ATP = O-phospho-L-seryl-[protein] + ADP + H(+). It carries out the reaction L-threonyl-[protein] + ATP = O-phospho-L-threonyl-[protein] + ADP + H(+). Down-regulated by YKP1 phosphorylation. This effect is counteracted in the presence of mannosyl-inositolphosphorylceramide (MIPC). In terms of biological role, flippase activator that phosphorylates DNF1 and DNF2 and which is involved in the generation of phospholipid asymmetry in membranes by the inward translocation of phospholipids and in the retrieval pathway from early endosomes to the trans-Golgi network (TGN). Also phosphorylates the N-terminal half of YPK1. Involved in pheromone-response. This chain is Flippase kinase 1 (FPK1), found in Saccharomyces cerevisiae (strain ATCC 204508 / S288c) (Baker's yeast).